Reading from the N-terminus, the 573-residue chain is MGQTRIQARTATKHIFVSGGVASSLGKGLTASSLGQLLTARGLRVTMQKLDPYLNVDPGTMNPFQHGEVFVTEDGAETDLDVGHYERFLDRDLSRDANVTTGQIYSSVIAKERRGEYLGDTVQVIPHITDEIKNRILAMRGPDLQGQTPDVVITEIGGTVGDIESQPFLEAARQIRHDVGRDNVFFLHVSLVPYLAPSGELKTKPTQHSVAALRNIGIQPDALILRCDREVPQALKSKIALMCDVEVDACISTPDAPSIYDIPKVLHREGLDAYVVRRLGLPFRDVDWTVWGDLLDRVHSPREEVEVALVGKYVDLPDAYLSVTEALRAGGFASRAKVNIRWVASDECETAAGAAAALRDVDAILIPGGFGIRGIEGKVGAIHFARTRGIPLLGLCLGLQCVVIEAARSIGLTDANSTEFEPDTQHPVISTMADQKQAVAGEADLGGTMRLGAYPAVLEKGSVVARAYGSEQVSERHRHRYEVNNAYRDKIATSGLKFSGTSPDGLLVEFVELPAEVHPFFVATQAHPELKSRPTRPHPLFAALIAAALKYKLAERLPVDIPDDELASAEQGA.

Positions 1–281 (MGQTRIQART…DAYVVRRLGL (281 aa)) are amidoligase domain. S23 is a binding site for CTP. UTP is bound at residue S23. ATP contacts are provided by residues 24-29 (SLGKGL) and D81. Mg(2+) contacts are provided by D81 and E155. CTP contacts are provided by residues 162 to 164 (DIE), 202 to 207 (KTKPTQ), and K238. UTP contacts are provided by residues 202–207 (KTKPTQ) and K238. Residues 306–554 (EVALVGKYVD…IAAALKYKLA (249 aa)) form the Glutamine amidotransferase type-1 domain. Position 369 (G369) interacts with L-glutamine. C396 functions as the Nucleophile; for glutamine hydrolysis in the catalytic mechanism. Residues 397–400 (LGLQ), E419, and R480 contribute to the L-glutamine site. Catalysis depends on residues H527 and E529.

Belongs to the CTP synthase family. In terms of assembly, homotetramer.

The catalysed reaction is UTP + L-glutamine + ATP + H2O = CTP + L-glutamate + ADP + phosphate + 2 H(+). It carries out the reaction L-glutamine + H2O = L-glutamate + NH4(+). The enzyme catalyses UTP + NH4(+) + ATP = CTP + ADP + phosphate + 2 H(+). Its pathway is pyrimidine metabolism; CTP biosynthesis via de novo pathway; CTP from UDP: step 2/2. Allosterically activated by GTP, when glutamine is the substrate; GTP has no effect on the reaction when ammonia is the substrate. The allosteric effector GTP functions by stabilizing the protein conformation that binds the tetrahedral intermediate(s) formed during glutamine hydrolysis. Inhibited by the product CTP, via allosteric rather than competitive inhibition. Catalyzes the ATP-dependent amination of UTP to CTP with either L-glutamine or ammonia as the source of nitrogen. Regulates intracellular CTP levels through interactions with the four ribonucleotide triphosphates. The protein is CTP synthase of Nocardia farcinica (strain IFM 10152).